Consider the following 153-residue polypeptide: Adenosine 5'-monophosphoramidase HINT3 (153 aa).

Residues 20–130 (IFCRIANKQE…PASQLGFLSR (111 aa)) enclose the HIT domain. Residues 46-47 (DI) and 115-117 (HLH) each bind AMP. A Histidine triad motif motif is present at residues 113-117 (HLHLH). His115 serves as the catalytic Tele-AMP-histidine intermediate.

It belongs to the HINT family. Forms dimers to octamers and even larger oligomer.

The protein resides in the cytoplasm. It localises to the nucleus. It catalyses the reaction adenosine 5'-phosphoramidate + H2O = AMP + NH4(+). Exhibits adenosine 5'-monophosphoramidase activity, hydrolyzing purine nucleotide phosphoramidates with a single phosphate group such as adenosine 5'monophosphoramidate (AMP-NH2) to yield AMP and NH2. Hydrolyzes lysyl-AMP (AMP-N-epsilon-(N-alpha-acetyl lysine methyl ester)) generated by lysine tRNA ligase. This Xenopus tropicalis (Western clawed frog) protein is Adenosine 5'-monophosphoramidase HINT3 (hint3).